Here is a 371-residue protein sequence, read N- to C-terminus: tRNA-specific 2-thiouridylase MnmA (371 aa).

Residues 24–31 and L50 each bind ATP; that span reads AMSGGVDS. The active-site Nucleophile is C120. A disulfide bond links C120 and C216. G144 lines the ATP pocket. The interaction with tRNA stretch occupies residues 166–168; that stretch reads KDQ. C216 (cysteine persulfide intermediate) is an active-site residue.

The protein belongs to the MnmA/TRMU family.

The protein resides in the cytoplasm. It catalyses the reaction S-sulfanyl-L-cysteinyl-[protein] + uridine(34) in tRNA + AH2 + ATP = 2-thiouridine(34) in tRNA + L-cysteinyl-[protein] + A + AMP + diphosphate + H(+). Its function is as follows. Catalyzes the 2-thiolation of uridine at the wobble position (U34) of tRNA, leading to the formation of s(2)U34. The chain is tRNA-specific 2-thiouridylase MnmA from Wolbachia sp. subsp. Brugia malayi (strain TRS).